The sequence spans 54 residues: Ovomucoid (54 aa).

Residues 4–54 (VDCSDYPKPSCTLEDKPLCGSDNQTYSNKCSFCNAVVDSNGTLTLSHFGKC) enclose the Kazal-like domain. Cystine bridges form between cysteine 6–cysteine 36, cysteine 14–cysteine 33, and cysteine 22–cysteine 54. Residue asparagine 43 is glycosylated (N-linked (GlcNAc...) asparagine).

The protein resides in the secreted. The sequence is that of Ovomucoid from Megapodius freycinet (Dusky scrubfowl).